Here is a 297-residue protein sequence, read N- to C-terminus: Haloalkane dehalogenase (297 aa).

An AB hydrolase-1 domain is found at 47–148; sequence PPIVLLHGEP…AIARLVVANG (102 aa). Aspartate 123 serves as the catalytic Nucleophile. Aspartate 250 serves as the catalytic Proton donor. The active-site Proton acceptor is the histidine 279.

The protein belongs to the haloalkane dehalogenase family. Type 1 subfamily. As to quaternary structure, monomer.

The catalysed reaction is 1-haloalkane + H2O = a halide anion + a primary alcohol + H(+). Functionally, catalyzes hydrolytic cleavage of carbon-halogen bonds in halogenated aliphatic compounds, leading to the formation of the corresponding primary alcohols, halide ions and protons. This Mycobacterium marinum (strain ATCC BAA-535 / M) protein is Haloalkane dehalogenase.